Consider the following 378-residue polypeptide: Succinyl-diaminopimelate desuccinylase (378 aa).

H68 provides a ligand contact to Zn(2+). The active site involves D70. D101 is a Zn(2+) binding site. The Proton acceptor role is filled by E135. Residues E136, E164, and H350 each contribute to the Zn(2+) site.

It belongs to the peptidase M20A family. DapE subfamily. In terms of assembly, homodimer. Zn(2+) serves as cofactor. It depends on Co(2+) as a cofactor.

The catalysed reaction is N-succinyl-(2S,6S)-2,6-diaminopimelate + H2O = (2S,6S)-2,6-diaminopimelate + succinate. It functions in the pathway amino-acid biosynthesis; L-lysine biosynthesis via DAP pathway; LL-2,6-diaminopimelate from (S)-tetrahydrodipicolinate (succinylase route): step 3/3. In terms of biological role, catalyzes the hydrolysis of N-succinyl-L,L-diaminopimelic acid (SDAP), forming succinate and LL-2,6-diaminopimelate (DAP), an intermediate involved in the bacterial biosynthesis of lysine and meso-diaminopimelic acid, an essential component of bacterial cell walls. In Vibrio parahaemolyticus serotype O3:K6 (strain RIMD 2210633), this protein is Succinyl-diaminopimelate desuccinylase.